The sequence spans 388 residues: Trans-enoyl reductase tenC (388 aa).

Position 51 to 54 (51 to 54) interacts with NADP(+); the sequence is VDGK. 142–149 is a substrate binding site; it reads VGIASVGM. NADP(+) is bound by residues 219–222, Tyr237, and 284–285; these read SSES and LD. 304-308 contacts substrate; that stretch reads SFTQF. 373–374 contacts NADP(+); the sequence is IK.

The protein belongs to the zinc-containing alcohol dehydrogenase family. Monomer.

It participates in secondary metabolite biosynthesis. Its function is as follows. Trans-enoyl reductase; part of the gene cluster that mediates the biosynthesis of tenellin-type 2-pyridones, iron-chelating compounds involved in iron stress tolerance, competition with the natural competitor fungus Metarhizium robertsii and insect hosts infection. TenC collaborates with the hybrid PKS-NRPS synthetase tenS to catalyze the assembly of the polyketide-amino acid backbone, since tenS lacks a designated enoylreductase (ER) domain. Upon formation of the polyketide backbone on the thiotemplate of tenS, the triketide is transferred to the NRPS module and linked to tyrosine to produce the pyrrolidine-2-dione intermediates, including pretellinin A, 11-hydropretellenin A, 12-hydropretellenin A, 13-hydropretellenin A, 14-hydropretellenin A, 12-oxopretellenin A and prototellinin D. The pathway begins with the assembly of the polyketide-amino acid backbone by the hybrid PKS-NRPS tenS with the help of the enoyl reductase tenC. These enzymes catalyze the synthesis of the pyrrolidine-2-dione intermediates pretellinin A, 11-hydropretellenin A, 12-hydropretellenin A, 13-hydropretellenin A, 14-hydropretellenin A, 12-oxopretellenin A and prototellinin D. The cytochrome P450 monooxygenase tenA then catalyzes an oxidative ring expansion of pretenellin A and 14-hydropretellenin A to form the 2-pyridone core, leading to pretenellin B and pyridovericin, respectively. The cytochrome P450 monooxygenase tenB is then required for the selective N-hydroxylation of the 2-pyridone nitrogen of yield tellinin and 15-hydroxytellenin (15-HT), respectively. The UDP-glucosyltransferase GT1 and the methyltransferase MT1, located outside the tenS gene cluster, contribute to the stepwise glycosylation and methylation of 15-HT to obtain the glycoside pyridovericin-N-O-(4-O-methyl-beta-D-glucopyranoside) (PMGP). Additional related compounds such as 1-O-methyl-15-HT, (8Z)-1-O-methyl-15-HT, and O-methyltenellin A are also produced but the enzymes involved in their biosynthesis have still to be determined. This chain is Trans-enoyl reductase tenC, found in Beauveria bassiana (strain ARSEF 2860) (White muscardine disease fungus).